We begin with the raw amino-acid sequence, 1114 residues long: MADNRIAGSLPTSSKWSFLPKSVSSHFKPSSNPRSSNPDIENAPPQNPNIHNPRNQSVSSKSTAYKNQMDSPNCRSQVSASRPRAISALKTRNEVEEEGASNPHVKVVVRIKPTKEYCWKVKKVSKVSYSVRDRHFTFDSVLDSNLNQDDVFQQIGVPLVRDALSGYNTSVLSYGQNGSGKTYTMWGPAGSMLEDPSPKGEQGLAPRIFQMLFSEIQREKIKSGGKEVNYQCRCSFLEIYNGQISDLIDQTQRNLKIKDDAKNGIYVENLTEEYVDSYEDVAQILMKGLSSRKVGATSTSFQSSRSHVILSFIVESWNKGASSRCFNTTRTSRINLVDLAGAGTNERDATKHCVEEEKFLKKSLSELGHVVNSLAENVHPGISDRSLHKTSCLTHLLQESLGGNSKLTILCNIFPSDKDTKRTMSTLRFGERAKAMGNKPMINEISEEDVNDLSDQIRLLKEELSKVKADACHSVGSKNDYFGAKNARESLNQLRVSLNRSLMLPKIDNDEEEITVDEDDFKELHLQIKSLRGSFNQKLKKFPVNRDSVNSSFVTAFGESELMDDDEICSEEVEVEENDFGESLEEHDSAATVCKSSEKSRIEEFVSENSISISPCRQSLILQEPIQSESPKFRDSLRKSIALSSSCLRNQNSLAKSIKSTCFAESQHIRSSLRGSKIFTGSTESLAASLRRGLDIIDNPMNPASNRCSVSLSSDNLTMQPPTDDRLPLSPLCPTCRICSSKLPSVVEGDGYHMEGVLEKQQELEKLCSEQAAKIEQLTRLVGQHKLQTEDETEKLMGASNGERLPSANENQLLSCITETYDVKQISDDDSKKTDFDIGEKEALLKEIEDLKKKLQTPVTMSTNELRSSLLARSFQLRSKNAEKDIEEERLRCTEMESEWISLTDEFRVEIETQRTRAEKAEAQLKQEKLSSEELEDALRRAVLGHARFVEHYTELQEKYNDLCSKHKATVEWITELKKAVAKAGKKGCGSRFAKSLASELSALRVERERERDLLKKENISLKIQLRNTAEAVHTAGEVLVRLREAEQSASAAEEKFNEVEEENEKLKKKMEKLKRRHKLEVVTIKKSLKQNTLPESALQPLHQRNSAIEEEGM.

The segment at 1-84 (MADNRIAGSL…RSQVSASRPR (84 aa)) is disordered. Composition is skewed to polar residues over residues 10–39 (LPTS…SNPD) and 48–80 (PNIH…QVSA). A Kinesin motor domain is found at 104–436 (HVKVVVRIKP…LRFGERAKAM (333 aa)). 175 to 182 (GQNGSGKT) serves as a coordination point for ATP. Coiled coils occupy residues 761–791 (QQEL…QTED), 872–942 (ARSF…LRRA), and 1038–1081 (EVLV…HKLE). Residues 1092 to 1114 (NTLPESALQPLHQRNSAIEEEGM) form a disordered region.

The protein belongs to the TRAFAC class myosin-kinesin ATPase superfamily. Kinesin family. KIN-12 subfamily.

In Arabidopsis thaliana (Mouse-ear cress), this protein is Kinesin-like protein KIN-12F.